A 990-amino-acid polypeptide reads, in one-letter code: Transposase for transposon Tn3926 (990 aa).

The interval 673–698 (GDGTTSSSDGQNFRTGSKAESTGHIN) is disordered. The span at 674–696 (DGTTSSSDGQNFRTGSKAESTGH) shows a compositional bias: polar residues.

The protein belongs to the transposase 7 family.

In terms of biological role, required for transposition of transposon Tn3926. This Escherichia coli protein is Transposase for transposon Tn3926 (tnpA).